The following is a 131-amino-acid chain: Inner membrane protein YecN (131 aa).

Topologically, residues 1–107 (MVSALYAVLS…RWRRSGMSAT (107 aa)) are cytoplasmic. A helical membrane pass occupies residues 108-128 (WCALLLMVLANLWYMPWELVF). The Periplasmic portion of the chain corresponds to 129–131 (SLR).

It is found in the cell inner membrane. This Escherichia coli O6:H1 (strain CFT073 / ATCC 700928 / UPEC) protein is Inner membrane protein YecN (yecN).